A 355-amino-acid polypeptide reads, in one-letter code: MGCTVSAEDKAAAERSRMIDRNLREDGEKAAREVKLLLLGAGESGKSTIVKQMKIIHEDGYSEEECRQYKAVVYSNTIQSIMAIIKAMGNLQIDFGDSSRADDARQLFALACTAEEQGIMPEDLANVIRRLWADHGVQACFNRSREYQLNDSAAYYLNDLERIARADYIPTQQDVLRTRVKTTGIVETHFTFKDLHFKMFDVGGQRSERKKWIHCFEGVTAIIFCVALSAYDLVLAEDEEMNRMHESMKLFDSICNNKWFTDTSIILFLNKKDLFEEKIVHSPLTICFPEYTGANKYDEAAGYIQSKFEDLNKRKDTKEIYTHFTCATDTKNVQFVFDAVTDVIIKNNLKDCGLF.

A lipid anchor (N-myristoyl glycine) is attached at Gly-2. A lipid anchor (S-palmitoyl cysteine) is attached at Cys-3. The 324-residue stretch at 32-355 folds into the G-alpha domain; that stretch reads REVKLLLLGA…KNNLKDCGLF (324 aa). A G1 motif region spans residues 35–48; the sequence is KLLLLGAGESGKST. GTP-binding positions include 40–47, 176–182, 201–205, 270–273, and Ala-327; these read GAGESGKS, LRTRVKT, DVGGQ, and NKKD. Mg(2+) is bound by residues Ser-47 and Thr-182. The tract at residues 174-182 is G2 motif; the sequence is DVLRTRVKT. Positions 197–206 are G3 motif; sequence FKMFDVGGQR. Residues 266–273 are G4 motif; that stretch reads ILFLNKKD. A G5 motif region spans residues 325 to 330; sequence TCATDT.

The protein belongs to the G-alpha family. G(i/o/t/z) subfamily. G proteins are composed of 3 units; alpha, beta and gamma. The alpha chain contains the guanine nucleotide binding site.

It is found in the cytoplasm. It localises to the cytoskeleton. Its subcellular location is the microtubule organizing center. The protein localises to the centrosome. The protein resides in the cell membrane. Functionally, guanine nucleotide-binding proteins (G proteins) are involved as modulators or transducers in various transmembrane signaling systems. The G(i) proteins are involved in hormonal regulation of adenylate cyclase: they inhibit the cyclase in response to beta-adrenergic stimuli. May play a role in cell division. The sequence is that of Guanine nucleotide-binding protein G(i) subunit alpha-2 (GNAI2) from Gallus gallus (Chicken).